The following is a 466-amino-acid chain: Asparagine--tRNA ligase (466 aa).

It belongs to the class-II aminoacyl-tRNA synthetase family. Homodimer.

It localises to the cytoplasm. It catalyses the reaction tRNA(Asn) + L-asparagine + ATP = L-asparaginyl-tRNA(Asn) + AMP + diphosphate + H(+). This is Asparagine--tRNA ligase from Klebsiella pneumoniae subsp. pneumoniae (strain ATCC 700721 / MGH 78578).